The primary structure comprises 484 residues: Probable cytosol aminopeptidase (484 aa).

The Mn(2+) site is built by Lys256 and Asp261. Residue Lys268 is part of the active site. Mn(2+) contacts are provided by Asp279, Asp338, and Glu340. The active site involves Arg342.

The protein belongs to the peptidase M17 family. It depends on Mn(2+) as a cofactor.

The protein localises to the cytoplasm. The enzyme catalyses Release of an N-terminal amino acid, Xaa-|-Yaa-, in which Xaa is preferably Leu, but may be other amino acids including Pro although not Arg or Lys, and Yaa may be Pro. Amino acid amides and methyl esters are also readily hydrolyzed, but rates on arylamides are exceedingly low.. It catalyses the reaction Release of an N-terminal amino acid, preferentially leucine, but not glutamic or aspartic acids.. In terms of biological role, presumably involved in the processing and regular turnover of intracellular proteins. Catalyzes the removal of unsubstituted N-terminal amino acids from various peptides. The chain is Probable cytosol aminopeptidase from Methylibium petroleiphilum (strain ATCC BAA-1232 / LMG 22953 / PM1).